Consider the following 373-residue polypeptide: Putative glutamate--cysteine ligase 2 (373 aa).

It belongs to the glutamate--cysteine ligase type 2 family. YbdK subfamily. As to quaternary structure, homodimer.

It carries out the reaction L-cysteine + L-glutamate + ATP = gamma-L-glutamyl-L-cysteine + ADP + phosphate + H(+). Functionally, ATP-dependent carboxylate-amine ligase which exhibits weak glutamate--cysteine ligase activity. This chain is Putative glutamate--cysteine ligase 2, found in Enterobacter sp. (strain 638).